We begin with the raw amino-acid sequence, 108 residues long: TYRO protein tyrosine kinase-binding protein (108 aa).

The signal sequence occupies residues 1–25; it reads MEGLRPSDRLLSLLLTVGGLSLVLA. Over 26–36 the chain is Extracellular; the sequence is QSECNCSSVSP. A helical transmembrane segment spans residues 37–57; sequence GVLAGIVLGDLMLTLLIALAV. Aspartate 46 provides a ligand contact to Ca(2+). Over 58–108 the chain is Cytoplasmic; that stretch reads YYLGRLVPRGRGATEVTRKQHIPETESPYQELQGQRTDVYSDLNTQRPYYK. The tract at residues 71–108 is disordered; it reads TEVTRKQHIPETESPYQELQGQRTDVYSDLNTQRPYYK. Residues 75 to 103 form the ITAM domain; sequence RKQHIPETESPYQELQGQRTDVYSDLNTQ. A compositionally biased stretch (polar residues) spans 84 to 108; sequence SPYQELQGQRTDVYSDLNTQRPYYK. Tyrosine 86 and tyrosine 97 each carry phosphotyrosine.

It belongs to the TYROBP family. Homodimer; disulfide-linked. Homotrimer; disulfide-linked. Homotetramer; disulfide-linked. Homotrimers and homotetramers form when low levels of partner receptors are available and is competitive with assembly with interacting receptors. They may represent alternative oligomerization states or may be intermediates in the receptor assembly process. Binding of a metal cation aids in homooligomerization through coordination of the metal ion by the subunits of the oligomer. Interacts with TREM1. Interacts with TREM2. Interacts with CLECSF5. Interacts with CD300LB and CD300C2. Interacts with CD300E. Interacts (via ITAM domain) with SYK (via SH2 domains); activates SYK mediating neutrophils and macrophages integrin-mediated activation. Interacts with KLRC2. Interacts with CD300H. Interacts with KLRD1. Interacts with SIGLEC1. In terms of processing, following ligand binding by associated receptors, tyrosine phosphorylated in the ITAM domain which leads to activation of additional tyrosine kinases and subsequent cell activation.

The protein resides in the cell membrane. Its function is as follows. Adapter protein which non-covalently associates with activating receptors found on the surface of a variety of immune cells to mediate signaling and cell activation following ligand binding by the receptors. TYROBP is tyrosine-phosphorylated in the ITAM domain following ligand binding by the associated receptors which leads to activation of additional tyrosine kinases and subsequent cell activation. Also has an inhibitory role in some cells. Non-covalently associates with activating receptors of the CD300 family to mediate cell activation. Also mediates cell activation through association with activating receptors of the CD200R family. Required for neutrophil activation mediated by integrin. Required for the activation of myeloid cells mediated by the CLEC5A/MDL1 receptor. Associates with natural killer (NK) cell receptors such as the KLRD1/KLRC2 heterodimer to mediate NK cell activation. Associates with TREM1 to mediate activation of neutrophils and monocytes. Associates with TREM2 on monocyte-derived dendritic cells to mediate up-regulation of chemokine receptor CCR7 and dendritic cell maturation and survival. Association with TREM2 mediates cytokine-induced formation of multinucleated giant cells which are formed by the fusion of macrophages. Stabilizes the TREM2 C-terminal fragment (TREM2-CTF) produced by TREM2 ectodomain shedding which suppresses the release of pro-inflammatory cytokines. In microglia, required with TREM2 for phagocytosis of apoptotic neurons. Required with ITGAM/CD11B in microglia to control production of microglial superoxide ions which promote the neuronal apoptosis that occurs during brain development. Promotes pro-inflammatory responses in microglia following nerve injury which accelerates degeneration of injured neurons. Positively regulates the expression of the IRAK3/IRAK-M kinase and IL10 production by liver dendritic cells and inhibits their T cell allosimulatory ability. Negatively regulates B cell proliferation. Required for CSF1-mediated osteoclast cytoskeletal organization. Positively regulates multinucleation during osteoclast development. The polypeptide is TYRO protein tyrosine kinase-binding protein (Bos taurus (Bovine)).